The sequence spans 277 residues: Hydroxyethylthiazole kinase (277 aa).

M55 contributes to the substrate binding site. ATP-binding residues include R130 and S176. G203 lines the substrate pocket.

Belongs to the Thz kinase family. Mg(2+) is required as a cofactor.

It carries out the reaction 5-(2-hydroxyethyl)-4-methylthiazole + ATP = 4-methyl-5-(2-phosphooxyethyl)-thiazole + ADP + H(+). It participates in cofactor biosynthesis; thiamine diphosphate biosynthesis; 4-methyl-5-(2-phosphoethyl)-thiazole from 5-(2-hydroxyethyl)-4-methylthiazole: step 1/1. Functionally, catalyzes the phosphorylation of the hydroxyl group of 4-methyl-5-beta-hydroxyethylthiazole (THZ). This is Hydroxyethylthiazole kinase from Cutibacterium acnes (strain DSM 16379 / KPA171202) (Propionibacterium acnes).